The following is a 376-amino-acid chain: Erythronate-4-phosphate dehydrogenase (376 aa).

Substrate contacts are provided by Ser-45 and Thr-67. Asp-147 is a binding site for NAD(+). The active site involves Arg-209. Asp-233 contributes to the NAD(+) binding site. Glu-238 is a catalytic residue. His-255 functions as the Proton donor in the catalytic mechanism. Gly-258 contributes to the NAD(+) binding site. Tyr-259 contributes to the substrate binding site.

This sequence belongs to the D-isomer specific 2-hydroxyacid dehydrogenase family. PdxB subfamily. As to quaternary structure, homodimer.

The protein resides in the cytoplasm. It catalyses the reaction 4-phospho-D-erythronate + NAD(+) = (R)-3-hydroxy-2-oxo-4-phosphooxybutanoate + NADH + H(+). The protein operates within cofactor biosynthesis; pyridoxine 5'-phosphate biosynthesis; pyridoxine 5'-phosphate from D-erythrose 4-phosphate: step 2/5. Its function is as follows. Catalyzes the oxidation of erythronate-4-phosphate to 3-hydroxy-2-oxo-4-phosphonooxybutanoate. The protein is Erythronate-4-phosphate dehydrogenase of Shewanella sp. (strain W3-18-1).